A 374-amino-acid chain; its full sequence is 5-pentadecatrienyl resorcinol O-methyltransferase (374 aa).

S-adenosyl-L-methionine contacts are provided by Asp-239, Asp-261, Met-262, and Lys-275. His-279 (proton acceptor) is an active-site residue.

It belongs to the class I-like SAM-binding methyltransferase superfamily. Cation-independent O-methyltransferase family. COMT subfamily. Homodimer. As to expression, expressed predominantly in root hairs.

It catalyses the reaction (8Z,11Z)-5-(pentadeca-8,11,14-trien-1-yl)resorcinol + S-adenosyl-L-methionine = (8Z,11Z)-5-(pentadeca- 8,11,14-trien-1-yl)resorcinol-3-methyl ether + S-adenosyl-L-homocysteine + H(+). O-methyltransferase involved in the biosynthetic pathway of the phytotoxin sorgoleone, a potent broad-spectrum inhibitor active against many agronomically important monocot and dicot weed species. Substrate specificity for alkylresorcinols. Strong preference for a five carbons alkyl side chain. This chain is 5-pentadecatrienyl resorcinol O-methyltransferase (OMT3), found in Sorghum bicolor (Sorghum).